We begin with the raw amino-acid sequence, 269 residues long: NAD-capped RNA hydrolase NudC (269 aa).

Residue R81 coordinates substrate. Residues C110, C113, C128, and C131 each coordinate Zn(2+). Y136 contributes to the substrate binding site. The region spanning 137 to 260 (PRIFPCIIVA…TIARALIEQT (124 aa)) is the Nudix hydrolase domain. 3 residues coordinate a divalent metal cation: A170, E186, and E190. The Nudix box motif lies at 171–192 (GFVEVGETLEQCVAREVLEETG). 204 to 211 (QPWAFPSS) provides a ligand contact to substrate. Residue E231 coordinates a divalent metal cation. Position 253 (A253) interacts with substrate.

It belongs to the Nudix hydrolase family. NudC subfamily. Homodimer. Mg(2+) serves as cofactor. Requires Mn(2+) as cofactor. Zn(2+) is required as a cofactor.

The enzyme catalyses a 5'-end NAD(+)-phospho-ribonucleoside in mRNA + H2O = a 5'-end phospho-adenosine-phospho-ribonucleoside in mRNA + beta-nicotinamide D-ribonucleotide + 2 H(+). It carries out the reaction NAD(+) + H2O = beta-nicotinamide D-ribonucleotide + AMP + 2 H(+). It catalyses the reaction NADH + H2O = reduced beta-nicotinamide D-ribonucleotide + AMP + 2 H(+). Its function is as follows. mRNA decapping enzyme that specifically removes the nicotinamide adenine dinucleotide (NAD) cap from a subset of mRNAs by hydrolyzing the diphosphate linkage to produce nicotinamide mononucleotide (NMN) and 5' monophosphate mRNA. The NAD-cap is present at the 5'-end of some mRNAs and stabilizes RNA against 5'-processing. Has preference for mRNAs with a 5'-end purine. Catalyzes the hydrolysis of a broad range of dinucleotide pyrophosphates. In Vibrio cholerae serotype O1 (strain ATCC 39315 / El Tor Inaba N16961), this protein is NAD-capped RNA hydrolase NudC.